The chain runs to 330 residues: N-acetyl-gamma-glutamyl-phosphate reductase (330 aa).

Cys155 is an active-site residue.

It belongs to the NAGSA dehydrogenase family. Type 1 subfamily.

It is found in the cytoplasm. It catalyses the reaction N-acetyl-L-glutamate 5-semialdehyde + phosphate + NADP(+) = N-acetyl-L-glutamyl 5-phosphate + NADPH + H(+). It participates in amino-acid biosynthesis; L-arginine biosynthesis; N(2)-acetyl-L-ornithine from L-glutamate: step 3/4. In terms of biological role, catalyzes the NADPH-dependent reduction of N-acetyl-5-glutamyl phosphate to yield N-acetyl-L-glutamate 5-semialdehyde. The chain is N-acetyl-gamma-glutamyl-phosphate reductase from Shewanella halifaxensis (strain HAW-EB4).